Reading from the N-terminus, the 285-residue chain is Ribosomal RNA small subunit methyltransferase I (285 aa).

The protein belongs to the methyltransferase superfamily. RsmI family.

Its subcellular location is the cytoplasm. The enzyme catalyses cytidine(1402) in 16S rRNA + S-adenosyl-L-methionine = 2'-O-methylcytidine(1402) in 16S rRNA + S-adenosyl-L-homocysteine + H(+). Catalyzes the 2'-O-methylation of the ribose of cytidine 1402 (C1402) in 16S rRNA. In Mycobacterium tuberculosis (strain ATCC 25618 / H37Rv), this protein is Ribosomal RNA small subunit methyltransferase I.